The primary structure comprises 449 residues: Endoglucanase A (449 aa).

The segment at residues 1 to 31 (MSTRRTAAALLAAAAVAVGGLTALTTTAAQA) is a signal peptide (tat-type signal). Positions 32 to 137 (APGCRVDYAV…SLNGTTCTGT (106 aa)) constitute a CBM2 domain. Cys-35 and Cys-134 form a disulfide bridge. Residues 127–170 (FSLNGTTCTGTVPTTSPTPTPTPTTPTPTPTPTPTPTPTVTPQP) form a disordered region. The span at 132–141 (TTCTGTVPTT) shows a compositional bias: low complexity. Residues 139 to 168 (PTTSPTPTPTPTTPTPTPTPTPTPTPTVTP) are linker ('hinge') (Pro-Thr box). Pro residues predominate over residues 142–167 (SPTPTPTPTTPTPTPTPTPTPTPTVT). Asp-247 is a catalytic residue. 2 disulfide bridges follow: Cys-248–Cys-291 and Cys-390–Cys-426. Asp-283 acts as the Proton donor in catalysis. Asp-423 functions as the Nucleophile in the catalytic mechanism. Positions 438-449 (EIALEMARNARW) are catalytic.

This sequence belongs to the glycosyl hydrolase 6 (cellulase B) family. In terms of processing, the linker region (also termed 'hinge') may be a potential site for proteolysis. Predicted to be exported by the Tat system. The position of the signal peptide cleavage has not been experimentally proven.

The enzyme catalyses Endohydrolysis of (1-&gt;4)-beta-D-glucosidic linkages in cellulose, lichenin and cereal beta-D-glucans.. The biological conversion of cellulose to glucose generally requires three types of hydrolytic enzymes: (1) Endoglucanases which cut internal beta-1,4-glucosidic bonds; (2) Exocellobiohydrolases that cut the disaccharide cellobiose from the non-reducing end of the cellulose polymer chain; (3) Beta-1,4-glucosidases which hydrolyze the cellobiose and other short cello-oligosaccharides to glucose. This Cellulomonas fimi protein is Endoglucanase A (cenA).